The primary structure comprises 196 residues: Protease (196 aa).

Active-site residues include His54, Asp70, and Cys121.

This sequence belongs to the peptidase C5 family. In terms of assembly, interacts with protease cofactor pVI-C; this interaction is necessary for protease activation.

The protein localises to the virion. It localises to the host nucleus. It carries out the reaction Cleaves proteins of the adenovirus and its host cell at two consensus sites: -Yaa-Xaa-Gly-Gly-|-Xaa- and -Yaa-Xaa-Gly-Xaa-|-Gly- (in which Yaa is Met, Ile or Leu, and Xaa is any amino acid).. Requires DNA and protease cofactor for maximal activation. Inside nascent virions, becomes partially activated by binding to the viral DNA, allowing it to cleave the cofactor that binds to the protease and fully activates it. Actin, like the viral protease cofactor, seems to act as a cofactor in the cleavage of cytokeratin 18 and of actin itself. Functionally, cleaves viral precursor proteins (pTP, pIIIa, pVI, pVII, pVIII, and pX) inside newly assembled particles giving rise to mature virions. Protease complexed to its cofactor slides along the viral DNA to specifically locate and cleave the viral precursors. Mature virions have a weakened organization compared to the unmature virions, thereby facilitating subsequent uncoating. Without maturation, the particle lacks infectivity and is unable to uncoat. Late in adenovirus infection, in the cytoplasm, may participate in the cytoskeleton destruction. Cleaves host cell cytoskeletal keratins K7 and K18. The chain is Protease from Bos taurus (Bovine).